Here is a 119-residue protein sequence, read N- to C-terminus: Microtubule nucleation factor SSNA1 (119 aa).

Residue Thr2 is modified to N-acetylthreonine. The interval 2 to 32 (TQQGAALQNYNNELVKCIEELCQKREELCRQ) is important for localization to the centrosome. A coiled-coil region spans residues 13 to 70 (NELVKCIEELCQKREELCRQIQQEEDEKQRLQNEVRQLTEKLARVNENLARKIASRNE).

The protein belongs to the SSNA1 family. Self-associates to form fibrils. Also forms dimers as well as monomers. Interacts with SPAST.

It localises to the nucleus. The protein localises to the cytoplasm. Its subcellular location is the cytoskeleton. The protein resides in the microtubule organizing center. It is found in the centrosome. It localises to the centriole. The protein localises to the midbody. Its subcellular location is the flagellum basal body. The protein resides in the flagellum axoneme. It is found in the cell projection. It localises to the axon. Microtubule-binding protein which stabilizes dynamic microtubules by slowing growth and shrinkage at both plus and minus ends and serves as a sensor of microtubule damage, protecting microtubules from the microtubule-severing enzyme SPAST. Induces microtubule branching which is mediated by the formation of long SSNA1 fibrils which guide microtubule protofilaments to split apart from the mother microtubule and form daughter microtubules. Plays a role in axon outgrowth and branching. Required for cell division. The chain is Microtubule nucleation factor SSNA1 from Mus musculus (Mouse).